A 217-amino-acid chain; its full sequence is Adenylate kinase (217 aa).

Position 11–16 (11–16) interacts with ATP; sequence GAGKGT. Residues 31-60 form an NMP region; sequence STGDMFREAMANETPVGLEAKSYIDKGDLV. Residues T32, R37, 58–60, 86–89, and Q93 each bind AMP; these read DLV and GFPR. The LID stretch occupies residues 127–165; it reads ARYICKNCGATYNKISNPTKVEGTCDRCGGHEFFQREDD. R128 provides a ligand contact to ATP. Residues C131 and C134 each contribute to the Zn(2+) site. 137 to 138 is a binding site for ATP; sequence TY. The Zn(2+) site is built by C151 and C154. 2 residues coordinate AMP: R162 and R173. Residue Q201 coordinates ATP.

It belongs to the adenylate kinase family. Monomer.

Its subcellular location is the cytoplasm. The enzyme catalyses AMP + ATP = 2 ADP. The protein operates within purine metabolism; AMP biosynthesis via salvage pathway; AMP from ADP: step 1/1. Catalyzes the reversible transfer of the terminal phosphate group between ATP and AMP. Plays an important role in cellular energy homeostasis and in adenine nucleotide metabolism. In Lactobacillus gasseri (strain ATCC 33323 / DSM 20243 / BCRC 14619 / CIP 102991 / JCM 1131 / KCTC 3163 / NCIMB 11718 / NCTC 13722 / AM63), this protein is Adenylate kinase.